The sequence spans 451 residues: DNA double-strand break repair protein Mre11 (451 aa).

Residues D8, H10, D49, and N84 each contribute to the Mn(2+) site. Catalysis depends on H85, which acts as the Proton donor. The Mn(2+) site is built by H168, H198, and H200. The disordered stretch occupies residues 374-451 (REDNPPDLGD…GRPSLDRWIG (78 aa)). A compositionally biased stretch (acidic residues) spans 396 to 416 (GSEESSEEPEESDGEEVGLEV).

It belongs to the MRE11/RAD32 family. Homodimer. Forms a heterotetramer composed of two Mre11 subunits and two Rad50 subunits. Mn(2+) is required as a cofactor.

With respect to regulation, nuclease activity is regulated by Rad50. In terms of biological role, part of the Rad50/Mre11 complex, which is involved in the early steps of DNA double-strand break (DSB) repair. The complex may facilitate opening of the processed DNA ends to aid in the recruitment of HerA and NurA. Mre11 binds to DSB ends and has both double-stranded 3'-5' exonuclease activity and single-stranded endonuclease activity. The protein is DNA double-strand break repair protein Mre11 of Methanopyrus kandleri (strain AV19 / DSM 6324 / JCM 9639 / NBRC 100938).